The sequence spans 467 residues: Transcriptional modulator WTM2 (467 aa).

A compositionally biased stretch (low complexity) spans 1–12; the sequence is MAKSKSSQGASG. 2 disordered regions span residues 1 to 22 and 84 to 121; these read MAKS…PSLY and TFYD…AFQD. The segment covering 87–100 has biased composition (acidic residues); that stretch reads DDDDDDDNDDDDEE. WD repeat units lie at residues 244 to 282, 287 to 327, and 349 to 389; these read PGTN…KPLW, PKNG…LATT, and SGGD…SRND.

Its function is as follows. Transcriptional modulator with roles in meiotic regulation and silencing. This is Transcriptional modulator WTM2 (WTM2) from Saccharomyces cerevisiae (strain ATCC 204508 / S288c) (Baker's yeast).